We begin with the raw amino-acid sequence, 632 residues long: Palmitoyltransferase ZDHHC17 (632 aa).

Residues Met-1–Lys-304 are Cytoplasmic-facing. Residues Met-11 to Val-305 form a necessary and sufficient for interaction with DNAJC5 and SNAP25 region. ANK repeat units lie at residues Thr-51–Pro-86, Glu-89–Gln-118, Leu-123–Leu-152, Glu-156–Met-185, Asn-189–Leu-219, His-224–Ala-253, and Lys-257–Tyr-286. The next 2 helical transmembrane spans lie at Val-305 to Ile-325 and Asp-326 to Ser-346. Residues Lys-347–Ala-357 lie on the Cytoplasmic side of the membrane. The chain crosses the membrane as a helical span at residues Leu-358–Phe-378. At Trp-379–Asp-381 the chain is on the lumenal side. A helical transmembrane segment spans residues Leu-382–Phe-402. Over Gly-403 to Arg-480 the chain is Cytoplasmic. The 51-residue stretch at Ile-437–Phe-487 folds into the DHHC domain. Cys-467 acts as the S-palmitoyl cysteine intermediate in catalysis. Residues Tyr-481–Ile-501 form a helical membrane-spanning segment. Residues Ser-502 to Pro-529 are Lumenal-facing. A helical membrane pass occupies residues Trp-530–Met-550. Over Cys-551–Val-632 the chain is Cytoplasmic.

Belongs to the DHHC palmitoyltransferase family. AKR/ZDHHC17 subfamily. In terms of assembly, interacts (via ANK repeats) with numerous proteins (via the consensus sequence motif [VIAP]-[VIT]-x-x-Q-P). Interacts (via ANK repeats) with CLIP3. Interacts (via ANK repeats) with HTT; this interaction is inversely correlated to the length of the polyglutamine tract added to the huntingtin protein in Huntington disease. Interacts (via ANK repeats) with DNAJC5 (via C-terminus). Interacts (via ANK repeats) with MAP6. Interacts (via ANK repeats) with SNAP23. Interacts (via ANK repeats) with SNAP25. Interacts (via ANK repeats) with EVL. Interacts with SPRED1 and SPRED3. Interacts with GPM6A and OPTN. May interact (via ANK repeats) with SPRED2. May interact with NTRK1; may regulate its localization and function. Autopalmitoylated. Autopalmitoylation has a regulatory role in ZDHHC17-mediated Mg(2+) transport. Expressed in all brain regions. Expression is highest in the cortex, cerebellum, occipital lobe and caudate and lowest in the spinal cord. Expression is also seen in testis, pancreas, heart and kidney.

Its subcellular location is the golgi apparatus membrane. The protein resides in the cytoplasmic vesicle membrane. It is found in the presynaptic cell membrane. The enzyme catalyses L-cysteinyl-[protein] + hexadecanoyl-CoA = S-hexadecanoyl-L-cysteinyl-[protein] + CoA. It carries out the reaction L-cysteinyl-[protein] + tetradecanoyl-CoA = S-tetradecanoyl-L-cysteinyl-[protein] + CoA. It catalyses the reaction L-cysteinyl-[protein] + octadecanoyl-CoA = S-octadecanoyl-L-cysteinyl-[protein] + CoA. In terms of biological role, palmitoyltransferase that catalyzes the addition of palmitate onto various protein substrates and is involved in a variety of cellular processes. Has no stringent fatty acid selectivity and in addition to palmitate can also transfer onto target proteins myristate from tetradecanoyl-CoA and stearate from octadecanoyl-CoA. Palmitoyltransferase specific for a subset of neuronal proteins, including SNAP25, DLG4/PSD95, GAD2, SYT1 and HTT. Also palmitoylates neuronal protein GPM6A as well as SPRED1 and SPRED3. Could also play a role in axonogenesis through the regulation of NTRK1 and the downstream ERK1/ERK2 signaling cascade. May be involved in the sorting or targeting of critical proteins involved in the initiating events of endocytosis at the plasma membrane. May play a role in Mg(2+) transport. Could also palmitoylate DNAJC5 and regulate its localization to the Golgi membrane. Palmitoylates CASP6, thereby preventing its dimerization and subsequent activation. The sequence is that of Palmitoyltransferase ZDHHC17 from Homo sapiens (Human).